The primary structure comprises 890 residues: Translation initiation factor IF-2 (890 aa).

The interval 45–302 (LIDHLNQKNS…SSLQQGFQKP (258 aa)) is disordered. Residues 67 to 81 (STLNIPSTGGKSKSV) show a composition bias toward polar residues. The segment covering 92-217 (VKRDPQEAER…RMAEENKWTD (126 aa)) has biased composition (basic and acidic residues). The segment covering 252 to 266 (GRGRNAKAARPKKGN) has biased composition (basic residues). Residues 267–280 (KHAESKADREEARA) are compositionally biased toward basic and acidic residues. The region spanning 389-558 (PRAPVVTIMG…LLQAEVLELK (170 aa)) is the tr-type G domain. Positions 398–405 (GHVDHGKT) are G1. 398–405 (GHVDHGKT) contacts GTP. Residues 423–427 (GITQH) are G2. The G3 stretch occupies residues 444-447 (DTPG). Residues 444–448 (DTPGH) and 498–501 (NKID) each bind GTP. Residues 498–501 (NKID) form a G4 region. The tract at residues 534-536 (SAK) is G5. Lysine 808 is subject to N6-acetyllysine.

It belongs to the TRAFAC class translation factor GTPase superfamily. Classic translation factor GTPase family. IF-2 subfamily.

It is found in the cytoplasm. Its function is as follows. One of the essential components for the initiation of protein synthesis. Protects formylmethionyl-tRNA from spontaneous hydrolysis and promotes its binding to the 30S ribosomal subunits. Also involved in the hydrolysis of GTP during the formation of the 70S ribosomal complex. This Shigella dysenteriae serotype 1 (strain Sd197) protein is Translation initiation factor IF-2.